The following is a 385-amino-acid chain: Putative 8-amino-7-oxononanoate synthase (385 aa).

Arg-21 is a substrate binding site. Pyridoxal 5'-phosphate is bound at residue 108–109; sequence GY. Residue His-133 participates in substrate binding. Pyridoxal 5'-phosphate-binding positions include Ser-182, 207–210, and 234–237; these read DEAH and TFGK. N6-(pyridoxal phosphate)lysine is present on Lys-237. Ser-351 lines the substrate pocket.

The protein belongs to the class-II pyridoxal-phosphate-dependent aminotransferase family. BioF subfamily. As to quaternary structure, homodimer. It depends on pyridoxal 5'-phosphate as a cofactor.

The enzyme catalyses 6-carboxyhexanoyl-[ACP] + L-alanine + H(+) = (8S)-8-amino-7-oxononanoate + holo-[ACP] + CO2. Its pathway is cofactor biosynthesis; biotin biosynthesis. In terms of biological role, catalyzes the decarboxylative condensation of pimeloyl-[acyl-carrier protein] and L-alanine to produce 8-amino-7-oxononanoate (AON), [acyl-carrier protein], and carbon dioxide. The sequence is that of Putative 8-amino-7-oxononanoate synthase (bioF) from Desulfosudis oleivorans (strain DSM 6200 / JCM 39069 / Hxd3) (Desulfococcus oleovorans).